Reading from the N-terminus, the 307-residue chain is N-acetylmuramic acid 6-phosphate etherase (307 aa).

The SIS domain maps to 62–225; sequence IVSSFNRGGR…STASMIRIGK (164 aa). Glu-90 acts as the Proton donor in catalysis. Glu-121 is an active-site residue.

Belongs to the GCKR-like family. MurNAc-6-P etherase subfamily. In terms of assembly, homodimer.

It catalyses the reaction N-acetyl-D-muramate 6-phosphate + H2O = N-acetyl-D-glucosamine 6-phosphate + (R)-lactate. It participates in amino-sugar metabolism; 1,6-anhydro-N-acetylmuramate degradation. Its pathway is amino-sugar metabolism; N-acetylmuramate degradation. It functions in the pathway cell wall biogenesis; peptidoglycan recycling. Functionally, specifically catalyzes the cleavage of the D-lactyl ether substituent of MurNAc 6-phosphate, producing GlcNAc 6-phosphate and D-lactate. Together with AnmK, is also required for the utilization of anhydro-N-acetylmuramic acid (anhMurNAc) either imported from the medium or derived from its own cell wall murein, and thus plays a role in cell wall recycling. The chain is N-acetylmuramic acid 6-phosphate etherase from Pseudoalteromonas atlantica (strain T6c / ATCC BAA-1087).